The primary structure comprises 338 residues: Ketol-acid reductoisomerase (NADP(+)) (338 aa).

A KARI N-terminal Rossmann domain is found at 2 to 182 (TKMYYEKDTD…GGARAGVLET (181 aa)). NADP(+)-binding positions include 25-28 (YGSQ), Ser-51, Ser-53, and 83-86 (DELQ). His-108 is an active-site residue. Residue Gly-134 participates in NADP(+) binding. Residues 183 to 330 (TFRTETETDL…SEIRKLYCWN (148 aa)) enclose the KARI C-terminal knotted domain. Positions 191, 195, 227, and 231 each coordinate Mg(2+). Ser-252 lines the substrate pocket.

The protein belongs to the ketol-acid reductoisomerase family. Requires Mg(2+) as cofactor.

It catalyses the reaction (2R)-2,3-dihydroxy-3-methylbutanoate + NADP(+) = (2S)-2-acetolactate + NADPH + H(+). It carries out the reaction (2R,3R)-2,3-dihydroxy-3-methylpentanoate + NADP(+) = (S)-2-ethyl-2-hydroxy-3-oxobutanoate + NADPH + H(+). It functions in the pathway amino-acid biosynthesis; L-isoleucine biosynthesis; L-isoleucine from 2-oxobutanoate: step 2/4. It participates in amino-acid biosynthesis; L-valine biosynthesis; L-valine from pyruvate: step 2/4. Its function is as follows. Involved in the biosynthesis of branched-chain amino acids (BCAA). Catalyzes an alkyl-migration followed by a ketol-acid reduction of (S)-2-acetolactate (S2AL) to yield (R)-2,3-dihydroxy-isovalerate. In the isomerase reaction, S2AL is rearranged via a Mg-dependent methyl migration to produce 3-hydroxy-3-methyl-2-ketobutyrate (HMKB). In the reductase reaction, this 2-ketoacid undergoes a metal-dependent reduction by NADPH to yield (R)-2,3-dihydroxy-isovalerate. The sequence is that of Ketol-acid reductoisomerase (NADP(+)) from Clostridium botulinum (strain Alaska E43 / Type E3).